A 336-amino-acid chain; its full sequence is Tryptophan--tRNA ligase (336 aa).

ATP is bound by residues 15-17 and 24-25; these read QPT and GN. Residues 16-25 carry the 'HIGH' region motif; it reads PTSDSLHLGN. Aspartate 141 contributes to the L-tryptophan binding site. ATP is bound by residues 153-155, isoleucine 192, and 201-205; these read GED and KMSKS. A 'KMSKS' region motif is present at residues 201–205; the sequence is KMSKS.

This sequence belongs to the class-I aminoacyl-tRNA synthetase family. As to quaternary structure, homodimer.

The protein resides in the cytoplasm. The enzyme catalyses tRNA(Trp) + L-tryptophan + ATP = L-tryptophyl-tRNA(Trp) + AMP + diphosphate + H(+). Its function is as follows. Catalyzes the attachment of tryptophan to tRNA(Trp). The sequence is that of Tryptophan--tRNA ligase from Mycobacterium tuberculosis (strain CDC 1551 / Oshkosh).